We begin with the raw amino-acid sequence, 387 residues long: Probable nitrate transporter NarT (387 aa).

Helical transmembrane passes span T14 to I34, I45 to Y65, I69 to L89, G97 to V117, G137 to I157, N161 to G181, W211 to V231, G246 to F266, A268 to L288, L294 to F314, G330 to V350, and H358 to L378.

The protein belongs to the major facilitator superfamily. Nitrate/nitrite porter (TC 2.A.1.8) family.

The protein resides in the cell membrane. In terms of biological role, probably required for nitrate uptake under anoxic conditions. Also possibly involved in excretion of nitrite produced by the dissimilatory reduction of nitrate. The protein is Probable nitrate transporter NarT (narT) of Staphylococcus epidermidis (strain ATCC 35984 / DSM 28319 / BCRC 17069 / CCUG 31568 / BM 3577 / RP62A).